Consider the following 225-residue polypeptide: DnaA regulatory inactivator Hda (225 aa).

The protein belongs to the DnaA family. HdA subfamily. In terms of assembly, the active form seems to be an ADP-bound monomer. Forms the RIDA complex (regulatory inactivation of DnaA) of ATP-DnaA, ADP-Hda and the DNA-loaded beta sliding clamp (dnaN).

Functionally, mediates the interaction of DNA replication initiator protein DnaA with DNA polymerase subunit beta sliding clamp (dnaN). Stimulates hydrolysis of ATP-DnaA to ADP-DnaA, rendering DnaA inactive for reinitiation, a process called regulatory inhibition of DnaA or RIDA. The chain is DnaA regulatory inactivator Hda from Klebsiella pneumoniae (strain 342).